The sequence spans 472 residues: 4-O-methyl-glucuronoyl methylesterase 1 (472 aa).

An N-terminal signal peptide occupies residues 1-20 (MKSAAYLAALAAVLPAYVNA). Residues 21 to 56 (QAQEWGQCGGIGWTGATTCVSGTVCTVLNPYYSQCL) form the CBM1 domain. Residues 62–97 (TAPPPPPPPPTSVSSSSSSSTSSAPPSGPSGTSPTC) form a disordered region. The span at 63–72 (APPPPPPPPT) shows a compositional bias: pro residues. Positions 73-96 (SVSSSSSSSTSSAPPSGPSGTSPT) are enriched in low complexity. Cystine bridges form between Cys97/Cys131, Cys283/Cys419, and Cys315/Cys391. A GXSYXG catalytic site motif motif is present at residues 282-287 (GCSRDG). Ser284 (nucleophile) is an active-site residue. Positions 288, 330, 338, and 382 each coordinate substrate. His418 functions as the Proton donor/acceptor in the catalytic mechanism. Asn465 is a glycosylation site (N-linked (GlcNAc...) asparagine).

Belongs to the carbohydrate esterase 15 (CE15) family.

It localises to the secreted. The catalysed reaction is a 4-O-methyl-alpha-D-glucuronosyl ester derivative + H2O = 4-O-methyl-alpha-D-glucuronate derivative + an alcohol + H(+). In terms of biological role, glucuronoyl esterase which may play a significant role in biomass degradation, as it is considered to disconnect hemicellulose from lignin through the hydrolysis of the ester bond between 4-O-methyl-D-glucuronic acid residues of glucuronoxylans and aromatic alcohols of lignin. Can hydrolyze benzyl glucuronic acid (BnGlcA), allyl glucuronic acid (allylGlcA) and to a lower degree methyl glucuronic acid (MeGlcA) in vitro. This Phanerochaete chrysosporium (strain RP-78 / ATCC MYA-4764 / FGSC 9002) (White-rot fungus) protein is 4-O-methyl-glucuronoyl methylesterase 1.